Consider the following 342-residue polypeptide: Biotin synthase (342 aa).

Positions 63–290 constitute a Radical SAM core domain; sequence NTVQLSTLLS…GAMVRLSAGR (228 aa). Positions 78, 82, and 85 each coordinate [4Fe-4S] cluster. C122, C153, C213, and R285 together coordinate [2Fe-2S] cluster.

It belongs to the radical SAM superfamily. Biotin synthase family. As to quaternary structure, homodimer. [4Fe-4S] cluster is required as a cofactor. Requires [2Fe-2S] cluster as cofactor.

The catalysed reaction is (4R,5S)-dethiobiotin + (sulfur carrier)-SH + 2 reduced [2Fe-2S]-[ferredoxin] + 2 S-adenosyl-L-methionine = (sulfur carrier)-H + biotin + 2 5'-deoxyadenosine + 2 L-methionine + 2 oxidized [2Fe-2S]-[ferredoxin]. It functions in the pathway cofactor biosynthesis; biotin biosynthesis; biotin from 7,8-diaminononanoate: step 2/2. In terms of biological role, catalyzes the conversion of dethiobiotin (DTB) to biotin by the insertion of a sulfur atom into dethiobiotin via a radical-based mechanism. The polypeptide is Biotin synthase (Cupriavidus pinatubonensis (strain JMP 134 / LMG 1197) (Cupriavidus necator (strain JMP 134))).